The primary structure comprises 501 residues: Phosphatase and actin regulator 1 (501 aa).

The RPEL 1 repeat unit spans residues 1–18 (MRQSREELIKRGVLKEIF). 2 disordered regions span residues 21 to 46 (DGEL…QVLS) and 295 to 329 (DNKE…EDNS). Over residues 36-46 (GQPLGSGQVLS) the composition is skewed to low complexity. Residues 295 to 304 (DNKENVPHEA) are compositionally biased toward basic and acidic residues. A compositionally biased stretch (acidic residues) spans 317-328 (EEEEEEDEDEDN). 3 RPEL repeats span residues 343–368 (DSLA…PMQT), 381–406 (TKLT…KPRN), and 419–444 (RRLT…IRFS). A disordered region spans residues 382 to 415 (KLTRRLSQRPTAEELEQRNILKPRNEQEEQEEKR). A compositionally biased stretch (basic and acidic residues) spans 392–415 (TAEELEQRNILKPRNEQEEQEEKR).

This sequence belongs to the phosphatase and actin regulator family. Interacts (via RPEL repeats) with ACTA1. As to expression, expressed in the gizzard, and in neurons from central and peripheral nervous systems.

Its subcellular location is the cytoplasm. The protein localises to the synapse. It is found in the nucleus. Binds actin monomers (G actin) and plays a role in the reorganization of the actin cytoskeleton and in formation of actin stress fibers. The protein is Phosphatase and actin regulator 1 (PHACTR1) of Gallus gallus (Chicken).